Reading from the N-terminus, the 279-residue chain is MPSYPVSTVNTPDGQVNVLQITDLHLSSHVPASDDETSSEVAVCQYSFEAIIKQALSKEIRCDLIVVTGDLVNKVEPAIYDHIFTVLQDTGIPFACIAGNHDVTDETGEDLPFYQRTLITRAADPRLLSRHLIESEHWQLLLLDSSITGKVEGEITATDIDWVREQLASCTKPALIALHHHVLPVDSEWIDSHMAKNAEEFWQHILPFENLRVIINGHTHQEQTRHHQGVTVYSTPSTCYQFKPFEDNFAYDKKVRPGYRWLQLANNGKVASWVERLDT.

The Fe cation site is built by Asp-23, His-25, Asp-70, Asn-100, His-179, His-218, and His-220. AMP-binding positions include His-25, Asp-70, and 100–101; that span reads NH. His-220 lines the AMP pocket.

It belongs to the cyclic nucleotide phosphodiesterase class-III family. Fe(2+) is required as a cofactor.

The sequence is that of Probable cyclic nucleotide phosphodiesterase Psyc_2036 from Psychrobacter arcticus (strain DSM 17307 / VKM B-2377 / 273-4).